We begin with the raw amino-acid sequence, 275 residues long: Fos-related antigen 1 (275 aa).

Disordered regions lie at residues 1-33 (MYRDFGEPGPSSGAGSAYGRPAQPQQAQTQTVQ) and 71-115 (TYPQ…VRRE). Residues 7–33 (EPGPSSGAGSAYGRPAQPQQAQTQTVQ) show a composition bias toward low complexity. Positions 107-170 (EERRRVRRER…ERLELVLEAH (64 aa)) constitute a bZIP domain. Residues 109 to 129 (RRRVRRERNKLAAAKCRNRRK) form a basic motif region. Residues 135-163 (LQAETDKLEDEKSGLQREIEELQKQKERL) are leucine-zipper. Basic and acidic residues predominate over residues 171 to 184 (RPICKIPEEDKKDT). A disordered region spans residues 171 to 275 (RPICKIPEED…PLGSPTLLAL (105 aa)). 3 stretches are compositionally biased toward low complexity: residues 185–194 (GGTSSTSGAG), 219–237 (LHTPTLMTTPSLTPFTPSL), and 256–275 (SSSSGDPSSDPLGSPTLLAL). Residue Ser-269 is modified to Phosphoserine.

This sequence belongs to the bZIP family. Fos subfamily. Heterodimer. Interacts with the BAF multiprotein chromatin-remodeling complex subunits SMARCB1 and SMARCD1. Interacts with ARID1A and JUN.

It is found in the nucleus. This Rattus norvegicus (Rat) protein is Fos-related antigen 1 (Fosl1).